The sequence spans 688 residues: ATP-dependent RNA helicase ded1 (688 aa).

2 stretches are compositionally biased toward polar residues: residues 1 to 15 (MADQ…LSID) and 55 to 67 (GLNN…NNNY). A disordered region spans residues 1–170 (MADQLSSGMG…TPDDPSKQHT (170 aa)). Residues 88–102 (GFEGQQGAGWGGPRP) are compositionally biased toward gly residues. A compositionally biased stretch (low complexity) spans 103-114 (QGGFNPNAYRGN). A compositionally biased stretch (gly residues) spans 115-129 (AGAGAGAGAGGGGGS). The Q motif motif lies at 194–222 (LTFSNPPLDNHLISNIQLARYNVPTPVQK). Residues 225 to 416 (IPIVMGGRDL…RDFLKDYIFL (192 aa)) form the Helicase ATP-binding domain. Position 238-245 (238-245 (AQTGSGKT)) interacts with ATP. Residues 360–363 (DEAD) carry the DEAD box motif. The Helicase C-terminal domain maps to 427–587 (NITQKVEYVE…EVPAFLETIA (161 aa)). Residues 590–615 (SSFGGGRGGRGGGRGGGRGRTQTADY) form a disordered region. The segment covering 592 to 608 (FGGGRGGRGGGRGGGRG) has biased composition (gly residues).

This sequence belongs to the DEAD box helicase family. DDX3/DED1 subfamily.

It is found in the cytoplasm. It carries out the reaction ATP + H2O = ADP + phosphate + H(+). Functionally, ATP-binding RNA helicase involved in translation initiation. Remodels RNA in response to ADP and ATP concentrations by facilitating disruption, but also formation of RNA duplexes. This Neurospora crassa (strain ATCC 24698 / 74-OR23-1A / CBS 708.71 / DSM 1257 / FGSC 987) protein is ATP-dependent RNA helicase ded1 (drh-9).